Here is a 484-residue protein sequence, read N- to C-terminus: Aldehyde dehydrogenase family 3 member A2 (484 aa).

At 1-463 (MERQVLRLRQ…FLLKQFNKGR (463 aa)) the chain is on the cytoplasmic side. NAD(+) is bound at residue 185–190 (GNTAVG). Catalysis depends on residues Glu-207 and Cys-241. Position 293 is a phosphoserine (Ser-293). The helical transmembrane segment at 464–484 (LGMLLFVCLVAVAAVIVKDQL) threads the bilayer. Positions 481 to 484 (KDQL) match the Prevents secretion from ER motif.

This sequence belongs to the aldehyde dehydrogenase family. In terms of assembly, homodimer.

Its subcellular location is the membrane. It localises to the microsome membrane. The protein localises to the endoplasmic reticulum membrane. The enzyme catalyses an aldehyde + NAD(+) + H2O = a carboxylate + NADH + 2 H(+). The catalysed reaction is a fatty aldehyde + NAD(+) + H2O = a fatty acid + NADH + 2 H(+). It catalyses the reaction hexadecanoate + NADH + 2 H(+) = hexadecanal + NAD(+) + H2O. It carries out the reaction octanal + NAD(+) + H2O = octanoate + NADH + 2 H(+). The enzyme catalyses (2E)-hexadecenal + NAD(+) + H2O = (E)-hexadec-2-enoate + NADH + 2 H(+). The catalysed reaction is 22-oxodocosanoate + NAD(+) + H2O = docosanedioate + NADH + 2 H(+). It catalyses the reaction 2,6,10,14-tetramethylpentadecanal + NAD(+) + H2O = 2,6,10,14-tetramethylpentadecanoate + NADH + 2 H(+). It carries out the reaction octadecanal + NAD(+) + H2O = octadecanoate + NADH + 2 H(+). The enzyme catalyses dodecanoate + NADH + 2 H(+) = dodecanal + NAD(+) + H2O. The catalysed reaction is decanal + NAD(+) + H2O = decanoate + NADH + 2 H(+). It catalyses the reaction tetradecanal + NAD(+) + H2O = tetradecanoate + NADH + 2 H(+). It carries out the reaction heptanal + NAD(+) + H2O = heptanoate + NADH + 2 H(+). The enzyme catalyses (2E,6E)-farnesal + NAD(+) + H2O = (2E,6E)-farnesoate + NADH + 2 H(+). Functionally, catalyzes the oxidation of medium and long-chain aliphatic aldehydes to fatty acids. Active on a variety of saturated and unsaturated aliphatic aldehydes between 6 and 24 carbons in length. Responsible for conversion of the sphingosine 1-phosphate (S1P) degradation product hexadecenal to hexadecenoic acid. The protein is Aldehyde dehydrogenase family 3 member A2 (Aldh3a2) of Mus musculus (Mouse).